We begin with the raw amino-acid sequence, 156 residues long: Large ribosomal subunit protein uL22 (156 aa).

Residues Val114 to Ser156 form a disordered region. Low complexity predominate over residues Gly127 to Ala146. Positions Lys147 to Ser156 are enriched in basic and acidic residues.

Belongs to the universal ribosomal protein uL22 family. As to quaternary structure, part of the 50S ribosomal subunit.

Its function is as follows. This protein binds specifically to 23S rRNA; its binding is stimulated by other ribosomal proteins, e.g. L4, L17, and L20. It is important during the early stages of 50S assembly. It makes multiple contacts with different domains of the 23S rRNA in the assembled 50S subunit and ribosome. In terms of biological role, the globular domain of the protein is located near the polypeptide exit tunnel on the outside of the subunit, while an extended beta-hairpin is found that lines the wall of the exit tunnel in the center of the 70S ribosome. The polypeptide is Large ribosomal subunit protein uL22 (Mycobacteroides abscessus (strain ATCC 19977 / DSM 44196 / CCUG 20993 / CIP 104536 / JCM 13569 / NCTC 13031 / TMC 1543 / L948) (Mycobacterium abscessus)).